Consider the following 95-residue polypeptide: Small ribosomal subunit protein bS6 (95 aa).

Belongs to the bacterial ribosomal protein bS6 family.

Its function is as follows. Binds together with bS18 to 16S ribosomal RNA. This Bacillus licheniformis (strain ATCC 14580 / DSM 13 / JCM 2505 / CCUG 7422 / NBRC 12200 / NCIMB 9375 / NCTC 10341 / NRRL NRS-1264 / Gibson 46) protein is Small ribosomal subunit protein bS6.